Consider the following 298-residue polypeptide: GTP cyclohydrolase FolE2 (298 aa).

This sequence belongs to the GTP cyclohydrolase IV family.

The catalysed reaction is GTP + H2O = 7,8-dihydroneopterin 3'-triphosphate + formate + H(+). Its pathway is cofactor biosynthesis; 7,8-dihydroneopterin triphosphate biosynthesis; 7,8-dihydroneopterin triphosphate from GTP: step 1/1. In terms of biological role, converts GTP to 7,8-dihydroneopterin triphosphate. This chain is GTP cyclohydrolase FolE2, found in Pseudomonas aeruginosa (strain LESB58).